The primary structure comprises 428 residues: MKTSLFKSLYFQVLTAIAIGILLGHYYPELGAQMKPLGDAFVKLIKMIIAPVIFCTVVTGIAGMESMKAVGRTGAVALLYFEIVSTIALIIGLIIVNVVQPGAGMNVDPATLDAQAVAVYAAQAKEQGIIAFLMDVIPGSVIGAFASGNILQVLLFAVLFGFALHRLGSKGQLIFNVIESFSQVIFGIINMIMRLAPIGAFGAMAFTIGKYGVGSLVQLGQLIICFYITCILFVVVVLGTIARVTGFSIFKFIRYIREELLIVLGTSSSESALPRMLDKMEKLGCRKSVVGLVIPTGYSFNLDGTSIYLTMAAVFIAQATNSHMDIFHQITLLVVLLLSSKGAAGVTGSGFIVLAATISAVGHLPVAGLALILGIDRFMSEARALTNLVGNGVATVVVAKWVKELDHQKLDDVLNNRAPDGKTHEISS.

9 helical membrane passes run 5–27 (LFKS…GHYY), 47–64 (MIIA…IAGM), 77–99 (ALLY…VNVV), 141–163 (VIGA…FGFA), 184–206 (VIFG…AMAF), 216–238 (LVQL…VVVL), 289–311 (VVGL…YLTM), 326–348 (IFHQ…GVTG), and 353–375 (VLAA…ILGI).

Belongs to the dicarboxylate/amino acid:cation symporter (DAACS) (TC 2.A.23) family.

Its subcellular location is the cell inner membrane. Functionally, responsible for the transport of dicarboxylates such as succinate, fumarate, and malate from the periplasm across the inner membrane. This is Aerobic C4-dicarboxylate transport protein (dctA) from Salmonella typhimurium (strain LT2 / SGSC1412 / ATCC 700720).